The sequence spans 157 residues: uncharacterized protein (157 aa).

Positions 1–157 (MNRGPPLRSR…SFSFLVPSNS (157 aa)) are disordered. Residues 8–31 (RSRPPSSPPPASAFPGPSPFPSPS) show a composition bias toward pro residues. The span at 62 to 71 (RTSHPPRCPH) shows a compositional bias: basic residues. Residues 76-95 (PSAPSPPFTPPHPLPTPTPS) are compositionally biased toward pro residues. Composition is skewed to low complexity over residues 96–117 (SSPR…SLAS) and 124–157 (SFSS…PSNS).

This is an uncharacterized protein from Vitis vinifera (Grape).